The following is a 99-amino-acid chain: Putative septation protein SpoVG (99 aa).

This sequence belongs to the SpoVG family.

In terms of biological role, could be involved in septation. The protein is Putative septation protein SpoVG of Aster yellows witches'-broom phytoplasma (strain AYWB).